The following is a 513-amino-acid chain: uncharacterized protein (513 aa).

Disordered stretches follow at residues 72-113 (GVVP…TGQF) and 155-262 (IMGG…NPRF). Residues 82-106 (ANRTANPNTNSNPNPNATNAQPNPT) show a composition bias toward low complexity. Polar residues-rich tracts occupy residues 164–189 (EANS…QTQG) and 210–228 (TPLN…EFQQ). The span at 229 to 238 (TTSPIFSSSS) shows a compositional bias: low complexity. Over residues 239–248 (TPPPPPPRPS) the composition is skewed to pro residues. A compositionally biased stretch (polar residues) spans 253–262 (GESQNTNPRF). An RING-type; atypical zinc finger spans residues 396-437 (CTICMEMFKINDDVIQLPCKHYFHENCIKPWLRVNGTCAICR). Residues 439–513 (PVDPNSQQRN…DDFVDEEPLE (75 aa)) are disordered. Residues 442 to 493 (PNSQQRNNTSTDSANGHNPSNHANPSTSTTNDQGATLRNESFNAASQSNLSS) show a composition bias toward polar residues.

This is an uncharacterized protein from Schizosaccharomyces pombe (strain 972 / ATCC 24843) (Fission yeast).